Here is a 114-residue protein sequence, read N- to C-terminus: C-X-C motif chemokine 6 (114 aa).

The first 37 residues, 1-37 (MSLPSSRAARVPGPSGSLCALLALLLLLTPPGPLASA), serve as a signal peptide directing secretion. Intrachain disulfides connect Cys49/Cys75 and Cys51/Cys91.

This sequence belongs to the intercrine alpha (chemokine CxC) family.

It localises to the secreted. Functionally, chemotactic for neutrophil granulocytes. Signals through binding and activation of its receptors (CXCR1 and CXCR2). In addition to its chemotactic and angiogenic properties, it has strong antibacterial activity against Gram-positive and Gram-negative bacteria (90-fold-higher when compared to CXCL5 and CXCL7). This Homo sapiens (Human) protein is C-X-C motif chemokine 6 (CXCL6).